Reading from the N-terminus, the 465-residue chain is Ribulose bisphosphate carboxylase large chain (465 aa).

K4 carries the post-translational modification N6,N6,N6-trimethyllysine. 2 residues coordinate substrate: N113 and T163. The Proton acceptor role is filled by K165. K167 serves as a coordination point for substrate. The Mg(2+) site is built by K191, D193, and E194. Residue K191 is modified to N6-carboxylysine. The active-site Proton acceptor is the H284. Substrate is bound by residues R285, H317, and S369.

The protein belongs to the RuBisCO large chain family. Type I subfamily. Heterohexadecamer of 8 large chains and 8 small chains; disulfide-linked. The disulfide link is formed within the large subunit homodimers. It depends on Mg(2+) as a cofactor. The disulfide bond which can form in the large chain dimeric partners within the hexadecamer appears to be associated with oxidative stress and protein turnover.

It is found in the plastid. The protein resides in the chloroplast. The catalysed reaction is 2 (2R)-3-phosphoglycerate + 2 H(+) = D-ribulose 1,5-bisphosphate + CO2 + H2O. The enzyme catalyses D-ribulose 1,5-bisphosphate + O2 = 2-phosphoglycolate + (2R)-3-phosphoglycerate + 2 H(+). RuBisCO catalyzes two reactions: the carboxylation of D-ribulose 1,5-bisphosphate, the primary event in carbon dioxide fixation, as well as the oxidative fragmentation of the pentose substrate in the photorespiration process. Both reactions occur simultaneously and in competition at the same active site. The sequence is that of Ribulose bisphosphate carboxylase large chain from Ulmus alata (Winged elm).